The following is a 504-amino-acid chain: Maturase K (504 aa).

This sequence belongs to the intron maturase 2 family. MatK subfamily.

The protein resides in the plastid. Its subcellular location is the chloroplast. In terms of biological role, usually encoded in the trnK tRNA gene intron. Probably assists in splicing its own and other chloroplast group II introns. In Ochroma pyramidale (Balsa), this protein is Maturase K.